The primary structure comprises 601 residues: Ubiquilin-4 (601 aa).

In terms of domain architecture, Ubiquitin-like spans 13 to 87; the sequence is IRVTVKTPKD…VHLVIKTPQK (75 aa). Glycyl lysine isopeptide (Lys-Gly) (interchain with G-Cter in SUMO2) cross-links involve residues K23 and K62. The segment at 87–155 is disordered; sequence KAQDPAAATA…GAGEGSPSAT (69 aa). Residues 88 to 138 show a composition bias toward low complexity; that stretch reads AQDPAAATASSPSTPDPASAPSTTPASPATPAQPSTSGSASSDAGSGSRRS. S98 and S144 each carry phosphoserine. Gly residues predominate over residues 139 to 149; it reads SGGGPSPGAGE. STI1 domains lie at 192 to 229 and 230 to 261; these read NPEMLSQIMENPLVQDMMSNPDLMRHMIMANPQMQQLM and ERNPEISHMLNNPELMRQTMELARNPAMMQEM. T287 carries the post-translational modification Phosphothreonine. The segment at 301–366 is disordered; the sequence is FGNNPFSSLA…QVHPTVSNPF (66 aa). Residues 307-318 show a composition bias toward low complexity; it reads SSLAGNSDSSSS. S318 carries the phosphoserine; by ATM modification. Pro residues predominate over residues 329–340; it reads LPNPWSPSPPTS. Residues 344 to 354 are compositionally biased toward gly residues; sequence GSGGEGTGGSG. Residues 357–366 are compositionally biased toward polar residues; it reads QVHPTVSNPF. 2 consecutive STI1 domains span residues 393-440 and 444-476; these read NPQL…QEQL and LPVFLQQMQNPESLSILTNPRAMQALLQIQQGL. A disordered region spans residues 490 to 533; it reads LGSFGISRTPAPSAGSNAGSTPEAPTSSPATPATSSPTGASSAQ. Positions 507–533 are enriched in low complexity; it reads AGSTPEAPTSSPATPATSSPTGASSAQ. In terms of domain architecture, UBA spans 553–598; it reads QTPEVRFQQQLEQLNSMGFINREANLQALIATGGDINAAIERLLGS.

In terms of assembly, homooligomer. Binds signal sequences of proteins that are targeted to the endoplasmic reticulum. Interacts (via UBA domain) with GJA1 (not ubiquitinated) and with ubiquitin; both compete for the same binding site. Interacts (via UBA domain) with ubiquitin and with polyubiquitin chains. Interacts (via ubiquitin-like domain) with PSMD2 and PSMD4, regulatory subunits of the 26S proteasome. Interacts with ATXN1/SCA1; interaction with ATXN1 inhibits polyubiquitination of UBQLN4 and interferes with PSMD4 binding. Interacts with HERPUD1. Interacts (via ubiquitin-like domain) with UBQLN1 (via UBA domain). Interacts with UBQLN2. Interacts (via STI1 1 and 2 domains) with MAP1LC3A/B/C. Interacts with BAG6. Interacts with MRE11 (when ubiquitinated); interaction with ubiquitinated MRE11 leads to MRE11 removal from chromatin. Interacts with DESI1/POST; leading to nuclear export. Interacts with BCL2A1 and BCL2L10. As to quaternary structure, (Microbial infection) Interacts with Mumps virus protein SH. Phosphorylated by ATM at Ser-318 in response to DNA damage, leading to localization in the nucleus and recruitment to sites of DNA damage. Post-translationally, ubiquitinated; this does not lead to proteasomal degradation. May undergo both 'Lys-48'- and 'Lys-63'-linked polyubiquitination. Highly expressed in pancreas, kidney, skeletal muscle, heart and throughout the brain, and at lower levels in placenta, lung and liver.

The protein localises to the nucleus. It localises to the cytoplasm. Its subcellular location is the chromosome. The protein resides in the endoplasmic reticulum. It is found in the perinuclear region. The protein localises to the cytoplasmic vesicle. It localises to the autophagosome. Functionally, regulator of protein degradation that mediates the proteasomal targeting of misfolded, mislocalized or accumulated proteins. Acts by binding polyubiquitin chains of target proteins via its UBA domain and by interacting with subunits of the proteasome via its ubiquitin-like domain. Key regulator of DNA repair that represses homologous recombination repair: in response to DNA damage, recruited to sites of DNA damage following phosphorylation by ATM and acts by binding and removing ubiquitinated MRE11 from damaged chromatin, leading to MRE11 degradation by the proteasome. MRE11 degradation prevents homologous recombination repair, redirecting double-strand break repair toward non-homologous end joining (NHEJ). Specifically recognizes and binds mislocalized transmembrane-containing proteins and targets them to proteasomal degradation. Collaborates with DESI1/POST in the export of ubiquitinated proteins from the nucleus to the cytoplasm. Also plays a role in the regulation of the proteasomal degradation of non-ubiquitinated GJA1. Acts as an adapter protein that recruits UBQLN1 to the autophagy machinery. Mediates the association of UBQLN1 with autophagosomes and the autophagy-related protein LC3 (MAP1LC3A/B/C) and may assist in the maturation of autophagosomes to autolysosomes by mediating autophagosome-lysosome fusion. This Homo sapiens (Human) protein is Ubiquilin-4.